The sequence spans 1360 residues: Transmembrane protein 94 (1360 aa).

Topologically, residues 1-64 (MDLREKHLGE…FLHLSNRCSC (64 aa)) are cytoplasmic. Residues 65–85 (FHWPGASLMLLAVLLLLCCCG) form a helical membrane-spanning segment. The Lumenal segment spans residues 86-92 (GQPAGSQ). A helical transmembrane segment spans residues 93-113 (GVELVNASALFLLLLLNLVLI). Topologically, residues 114–273 (GRQDRLKRRE…RPVTALDNER (160 aa)) are cytoplasmic. A phosphoserine mark is found at Ser-221 and Ser-225. A helical membrane pass occupies residues 274–294 (FTVQSVMLHYAVPVVLAGFLI). Residues 295-320 (TNALRFMFKAPGVTSWQYTLLQLQVN) lie on the Lumenal side of the membrane. A helical membrane pass occupies residues 321–341 (GMLPILPLLFPVLWVLATACG). The Cytoplasmic portion of the chain corresponds to 342–1096 (EARVLAQMSK…RHATYGIRKC (755 aa)). The DKQGIL signature appears at 417–422 (DKQGIL). Phosphoserine occurs at positions 444, 445, and 454. Positions 487 to 545 (EQERSDWLADGPKPSEPYPHHKGHGRSKHPSGSNVSFSRDTEGGEEEPSKAQPGTEGDP) are disordered. The span at 506–515 (HHKGHGRSKH) shows a compositional bias: basic residues. Phosphoserine occurs at positions 517, 522, 802, and 945. The helical transmembrane segment at 1097-1117 (FLFLLQCQLTLVVIQFLSCLV) threads the bilayer. Residues 1118-1124 (QLPPLLS) lie on the Lumenal side of the membrane. Residues 1125 to 1145 (TTDILWLSCFCYPLLSISLLG) form a helical membrane-spanning segment. The Cytoplasmic segment spans residues 1146–1171 (KPPHSSIMSMATGKNLQSIPKKTQHY). Residues 1172 to 1192 (FLLCFLLKFSLTISSCLVCFG) form a helical membrane-spanning segment. Topologically, residues 1193–1232 (FTLQSFCDSARARNLTNCSSVMLCSNDDRAPAWFEDFANG) are lumenal. 2 N-linked (GlcNAc...) asparagine glycosylation sites follow: Asn-1206 and Asn-1209. Residues 1233–1253 (LLSAQKLTAALIVLHTVFISI) form a helical membrane-spanning segment. At 1254 to 1269 (THVHRTKPLWRKSPLT) the chain is on the cytoplasmic side. A helical membrane pass occupies residues 1270–1290 (NLWWAVTVPVVLLGQVVQTVV). At 1291 to 1310 (DLQLWTHRDSRVHFGLEDVP) the chain is on the lumenal side. The chain crosses the membrane as a helical span at residues 1311–1331 (LLTWLLGCLSLVLVVVTNEIV). Residues 1332-1360 (KLHEIRVRVRYQKRQKLQFETKLGMNSPF) are Cytoplasmic-facing. A GMN; metal-binding motif motif is present at residues 1355–1357 (GMN).

As to quaternary structure, forms homooligomers.

Its subcellular location is the endoplasmic reticulum membrane. Could function in the uptake of Mg(2+) from the cytosol into the endoplasmic reticulum and regulate intracellular Mg(2+) homeostasis. This Mus musculus (Mouse) protein is Transmembrane protein 94.